The following is an 846-amino-acid chain: Integrin beta-PS (846 aa).

Residues 1-28 (MILERNRRCQLALLMIAILAAIAGQTDA) form the signal peptide. Topologically, residues 29-777 (QKAAKLTAVS…NKECPAKVFM (749 aa)) are extracellular. Cysteines 46 and 55 form a disulfide. N-linked (GlcNAc...) asparagine glycosylation is present at asparagine 72. Positions 186–419 (DLYYLMDLSK…ELVKEEYRKI (234 aa)) constitute a VWFA domain. Cysteine 249 and cysteine 252 are oxidised to a cystine. Asparagine 266 and asparagine 277 each carry an N-linked (GlcNAc...) asparagine glycan. Cysteines 300 and 341 form a disulfide. Asparagine 403 and asparagine 428 each carry an N-linked (GlcNAc...) asparagine glycan. Disulfide bonds link cysteine 441-cysteine 453, cysteine 473-cysteine 741, cysteine 507-cysteine 530, cysteine 522-cysteine 533, cysteine 535-cysteine 544, cysteine 546-cysteine 579, cysteine 561-cysteine 577, cysteine 571-cysteine 582, cysteine 584-cysteine 599, cysteine 601-cysteine 624, cysteine 606-cysteine 622, cysteine 614-cysteine 627, cysteine 629-cysteine 638, cysteine 640-cysteine 664, cysteine 647-cysteine 662, cysteine 656-cysteine 667, cysteine 669-cysteine 682, cysteine 685-cysteine 688, cysteine 692-cysteine 701, cysteine 698-cysteine 771, and cysteine 719-cysteine 749. I-EGF domains follow at residues 507–545 (CENP…NKCE), 546–600 (CSAT…KHCE), 601–639 (CDNF…SNCG), and 640–683 (CQES…RHCE). N-linked (GlcNAc...) asparagine glycosylation occurs at asparagine 557. N-linked (GlcNAc...) asparagine glycosylation occurs at asparagine 603. Asparagine 644 is a glycosylation site (N-linked (GlcNAc...) asparagine). The N-linked (GlcNAc...) asparagine glycan is linked to asparagine 718. The helical transmembrane segment at 778 to 798 (LGIVMGVIAAIVLVGLAILLL) threads the bilayer. Residues 799 to 846 (WKLLTTIHDRREFARFEKERMNAKWDTGENPIYKQATSTFKNPMYAGK) lie on the Cytoplasmic side of the membrane. A phosphotyrosine mark is found at tyrosine 831 and tyrosine 843.

Belongs to the integrin beta chain family. As to quaternary structure, heterodimer of an alpha and a beta subunit. Beta-PS associates with either alpha-PS1, alpha-PS2, alpha-PS3, alpha-PS4 or alpha-PS5. As to expression, in ovaries, strongly expressed in follicle cells. In oocytes, expressed in the forming dorsal appendages (at protein level). Expressed in the embryonic dorsal cuticle, the larval eye and the wing imaginal disk. In testes, detected at the interface between somatic hub cells and cyst stem cells.

It localises to the cell membrane. It is found in the apical cell membrane. The protein resides in the lateral cell membrane. Its subcellular location is the basal cell membrane. Its function is as follows. Integrin alpha-PS1/beta-PS is a receptor for laminin. Integrin alpha-PS2/beta-PS is a receptor for Tig, wb and Ten-m. Contributes to endodermal integrity and adhesion between the midgut epithelium and the surrounding visceral muscle. Essential for migration of the primordial midgut cells and for maintaining, but not establishing, cell polarity in the midgut epithelium. The two beta subunits mediate midgut migration by distinct mechanisms: beta-PS requires rhea/talin and Itgbn does not. Required for rhea/talin correct cellular localization in the midgut. Required for many embryonic (dorsal closure and somatic muscle attachments) and postembryonic developmental processes (attachment between cell layers of imaginal disks, organization of ommatidial arrays and flight muscle development). Involved in the function and/or development of the olfactory system. In the testes, essential for shv-dependent maintenance of somatic hub cells and their localization to the apical tip. Plays a role in timely border cell migration during oogenesis. The polypeptide is Integrin beta-PS (mys) (Drosophila melanogaster (Fruit fly)).